We begin with the raw amino-acid sequence, 270 residues long: Urease accessory protein UreD (270 aa).

This sequence belongs to the UreD family. In terms of assembly, ureD, UreF and UreG form a complex that acts as a GTP-hydrolysis-dependent molecular chaperone, activating the urease apoprotein by helping to assemble the nickel containing metallocenter of UreC. The UreE protein probably delivers the nickel.

It is found in the cytoplasm. Its function is as follows. Required for maturation of urease via the functional incorporation of the urease nickel metallocenter. This chain is Urease accessory protein UreD, found in Synechocystis sp. (strain ATCC 27184 / PCC 6803 / Kazusa).